Here is a 508-residue protein sequence, read N- to C-terminus: ATP synthase subunit alpha, chloroplastic (508 aa).

ATP is bound at residue 170 to 177; that stretch reads GDRQTGKT.

Belongs to the ATPase alpha/beta chains family. As to quaternary structure, F-type ATPases have 2 components, F(1) - the catalytic core - and F(0) - the membrane proton channel. F(1) has five subunits: alpha(3), beta(3), gamma(1), delta(1), epsilon(1). F(0) has four main subunits: a(1), b(1), b'(1) and c(10-14). The alpha and beta chains form an alternating ring which encloses part of the gamma chain. F(1) is attached to F(0) by a central stalk formed by the gamma and epsilon chains, while a peripheral stalk is formed by the delta, b and b' chains.

Its subcellular location is the plastid. The protein resides in the chloroplast thylakoid membrane. The catalysed reaction is ATP + H2O + 4 H(+)(in) = ADP + phosphate + 5 H(+)(out). F(1)F(0) ATP synthase produces ATP from ADP in the presence of a proton or sodium gradient. F-type ATPases consist of two structural domains, F(1) containing the extramembraneous catalytic core and F(0) containing the membrane proton channel, linked together by a central stalk and a peripheral stalk. During catalysis, ATP synthesis in the catalytic domain of F(1) is coupled via a rotary mechanism of the central stalk subunits to proton translocation. Its function is as follows. The alpha chain is a regulatory subunit. This chain is ATP synthase subunit alpha, chloroplastic, found in Chlamydomonas reinhardtii (Chlamydomonas smithii).